The following is a 113-amino-acid chain: Large ribosomal subunit protein bL19 (113 aa).

This sequence belongs to the bacterial ribosomal protein bL19 family.

In terms of biological role, this protein is located at the 30S-50S ribosomal subunit interface and may play a role in the structure and function of the aminoacyl-tRNA binding site. The chain is Large ribosomal subunit protein bL19 from Corynebacterium jeikeium (strain K411).